A 1238-amino-acid polypeptide reads, in one-letter code: ATP-dependent helicase/nuclease subunit A (1238 aa).

In terms of domain architecture, UvrD-like helicase ATP-binding spans 6-474 (TKWTETQKSA…IKLSENFRSR (469 aa)). 27–34 (AGAGTGKT) provides a ligand contact to ATP. Residues 512–811 (PFEGNCGGDV…RIMSIHKSKG (300 aa)) enclose the UvrD-like helicase C-terminal domain.

This sequence belongs to the helicase family. AddA subfamily. Heterodimer of AddA and AddB/RexB. Mg(2+) serves as cofactor.

The enzyme catalyses Couples ATP hydrolysis with the unwinding of duplex DNA by translocating in the 3'-5' direction.. It catalyses the reaction ATP + H2O = ADP + phosphate + H(+). Functionally, the heterodimer acts as both an ATP-dependent DNA helicase and an ATP-dependent, dual-direction single-stranded exonuclease. Recognizes the chi site generating a DNA molecule suitable for the initiation of homologous recombination. The AddA nuclease domain is required for chi fragment generation; this subunit has the helicase and 3' -&gt; 5' nuclease activities. The sequence is that of ATP-dependent helicase/nuclease subunit A from Clostridium kluyveri (strain NBRC 12016).